The sequence spans 779 residues: Ribosome-releasing factor 2, mitochondrial (779 aa).

The region spanning 68-353 is the tr-type G domain; the sequence is AKIRNIGIMA…AVTTYLPSPE (286 aa). GTP is bound by residues 77 to 84, 141 to 145, and 195 to 198; these read AHIDAGKT, DTPGH, and NKMD.

It belongs to the TRAFAC class translation factor GTPase superfamily. Classic translation factor GTPase family. EF-G/EF-2 subfamily.

The protein resides in the mitochondrion. It catalyses the reaction GTP + H2O = GDP + phosphate + H(+). Mitochondrial GTPase that mediates the disassembly of ribosomes from messenger RNA at the termination of mitochondrial protein biosynthesis. Acts in collaboration with MRRF. GTP hydrolysis follows the ribosome disassembly and probably occurs on the ribosome large subunit. Not involved in the GTP-dependent ribosomal translocation step during translation elongation. The polypeptide is Ribosome-releasing factor 2, mitochondrial (Gfm2) (Mus musculus (Mouse)).